Consider the following 137-residue polypeptide: Competence protein ComGG (137 aa).

The helical transmembrane segment at 10 to 30 (GVLLYAVTIAAIFSLLLQFYL) threads the bilayer. A disordered region spans residues 106–137 (EKRDKKEEVATDSSEKVEKKKSEEKPEKKENS).

As to quaternary structure, the transformation pili are flexible filaments, consisting mainly of the major pilin ComGC and smaller amounts of the minor pilins, including at least ComGD, ComGF and ComGG, and perhaps ComGE. Interacts with ComGC; the interaction is probably direct. Interacts with ComGD. Interacts with ComGE. Interacts with ComGF. May act as a link between ComGC, ComGD and ComGF.

It is found in the fimbrium. It localises to the cell membrane. In terms of biological role, required for formation of the type IV-like pilus (T4P) that plays a role in transformation. Transformation pili are dynamically extended and retracted, perhaps thereby promoting DNA uptake and transformation. Required for transformation. The polypeptide is Competence protein ComGG (Streptococcus pneumoniae (strain ATCC BAA-255 / R6)).